The chain runs to 241 residues: Phosphoribosylaminoimidazole-succinocarboxamide synthase (241 aa).

The protein belongs to the SAICAR synthetase family.

It catalyses the reaction 5-amino-1-(5-phospho-D-ribosyl)imidazole-4-carboxylate + L-aspartate + ATP = (2S)-2-[5-amino-1-(5-phospho-beta-D-ribosyl)imidazole-4-carboxamido]succinate + ADP + phosphate + 2 H(+). It functions in the pathway purine metabolism; IMP biosynthesis via de novo pathway; 5-amino-1-(5-phospho-D-ribosyl)imidazole-4-carboxamide from 5-amino-1-(5-phospho-D-ribosyl)imidazole-4-carboxylate: step 1/2. This is Phosphoribosylaminoimidazole-succinocarboxamide synthase from Deinococcus geothermalis (strain DSM 11300 / CIP 105573 / AG-3a).